The primary structure comprises 208 residues: Uracil phosphoribosyltransferase (208 aa).

5-phospho-alpha-D-ribose 1-diphosphate is bound by residues Arg78, Arg103, and Asp130–Ser138. Uracil is bound by residues Ile193 and Gly198–Ala200. Residue Asp199 participates in 5-phospho-alpha-D-ribose 1-diphosphate binding.

It belongs to the UPRTase family. Mg(2+) serves as cofactor.

It carries out the reaction UMP + diphosphate = 5-phospho-alpha-D-ribose 1-diphosphate + uracil. It participates in pyrimidine metabolism; UMP biosynthesis via salvage pathway; UMP from uracil: step 1/1. With respect to regulation, allosterically activated by GTP. In terms of biological role, catalyzes the conversion of uracil and 5-phospho-alpha-D-ribose 1-diphosphate (PRPP) to UMP and diphosphate. The polypeptide is Uracil phosphoribosyltransferase (Mannheimia succiniciproducens (strain KCTC 0769BP / MBEL55E)).